Consider the following 149-residue polypeptide: Urease accessory protein UreE (149 aa).

It belongs to the UreE family.

It is found in the cytoplasm. Involved in urease metallocenter assembly. Binds nickel. Probably functions as a nickel donor during metallocenter assembly. The polypeptide is Urease accessory protein UreE (Synechococcus sp. (strain JA-3-3Ab) (Cyanobacteria bacterium Yellowstone A-Prime)).